The sequence spans 164 residues: Magnesium-dependent phosphatase 1 (164 aa).

The Nucleophile role is filled by aspartate 11. Residue aspartate 11 coordinates Mg(2+). 2 residues coordinate phosphate: leucine 12 and aspartate 13. Position 13 (aspartate 13) interacts with Mg(2+). Aspartate 13 acts as the Proton donor in catalysis. Tryptophan 20 contacts substrate. Serine 69, arginine 70, and lysine 100 together coordinate phosphate. Arginine 70 is a substrate binding site. A Mg(2+)-binding site is contributed by aspartate 123.

The protein belongs to the HAD-like hydrolase superfamily. The cofactor is Mg(2+).

It carries out the reaction O-phospho-L-tyrosyl-[protein] + H2O = L-tyrosyl-[protein] + phosphate. Its activity is regulated as follows. Inhibited by vanadate and zinc, and slightly by calcium. Its function is as follows. Magnesium-dependent phosphatase which may act as a tyrosine phosphatase. The sequence is that of Magnesium-dependent phosphatase 1 (Mdp1) from Mus musculus (Mouse).